The sequence spans 390 residues: S-adenosylmethionine synthase 2 (390 aa).

Residue Glu9 participates in Mg(2+) binding. His15 contacts ATP. K(+) is bound at residue Glu43. L-methionine-binding residues include Glu56 and Gln99. ATP-binding positions include 167-169 (DGK), 235-238 (SGRF), Asp246, 252-253 (RK), Ala269, Lys273, and Lys277. Residue Asp246 participates in L-methionine binding. Lys277 lines the L-methionine pocket.

Belongs to the AdoMet synthase family. Homotetramer. Mn(2+) serves as cofactor. Mg(2+) is required as a cofactor. Requires Co(2+) as cofactor. The cofactor is K(+).

The protein localises to the cytoplasm. It catalyses the reaction L-methionine + ATP + H2O = S-adenosyl-L-methionine + phosphate + diphosphate. Its pathway is amino-acid biosynthesis; S-adenosyl-L-methionine biosynthesis; S-adenosyl-L-methionine from L-methionine: step 1/1. Catalyzes the formation of S-adenosylmethionine from methionine and ATP. The reaction comprises two steps that are both catalyzed by the same enzyme: formation of S-adenosylmethionine (AdoMet) and triphosphate, and subsequent hydrolysis of the triphosphate. This is S-adenosylmethionine synthase 2 (SAMS2) from Nicotiana tabacum (Common tobacco).